Consider the following 275-residue polypeptide: Ceramide synthase (275 aa).

The TLC domain maps to 34 to 261; it reads ADAVIVSARL…ICRGACRLFR (228 aa). A run of 4 helical transmembrane segments spans residues 130-150, 159-179, 194-214, and 232-252; these read FLMVLHHAAMVLVCFPLSVVW, LGCMLMAEVSTPFVCLGKILI, ALMLLSFLCCRVLLFPYLYWA, and AHVNLGAALLLAPQLYWFFLI.

In terms of tissue distribution, each isoform has a distinct expression pattern. Isoform 1 is highly expressed in brain. Isoform 2 is expressed at low levels, if any, in all analyzed tissues, with slightly higher levels in testis. Isoform 3 is expressed at very high levels in testis and, at lower levels, in white adipose tissue. In epididymal fat, isoform 3 is expressed at higher levels in obese mice compared with lean mice. By contrast, isoform 1 and 2 levels are significantly lower in obese mice compared with lean mice.

The protein resides in the golgi apparatus membrane. It is found in the endoplasmic reticulum membrane. The enzyme catalyses sphing-4-enine + octadecanoyl-CoA = N-octadecanoylsphing-4-enine + CoA + H(+). It carries out the reaction eicosanoyl-CoA + sphing-4-enine = N-eicosanoyl-sphing-4-enine + CoA + H(+). The catalysed reaction is sphing-4-enine + hexadecanoyl-CoA = N-hexadecanoylsphing-4-enine + CoA + H(+). Its function is as follows. Involved in ceramide synthesis. In vitro, isoform 3 stimulates the production of C16-, C18- and C20-ceramides, isoform 1 slightly increases the levels of C18- and C20-ceramides, while isoform 2 exhibits only minimal activity. May interfere with adipogenesis by stimulating ceramide synthesis. This is Ceramide synthase (Tlcd3b) from Mus musculus (Mouse).